The chain runs to 303 residues: Dihydroorotate dehydrogenase B (NAD(+)), catalytic subunit (303 aa).

FMN-binding positions include Ser-21 and 45–46 (KG). Substrate-binding positions include Lys-45 and 69 to 73 (NCIGL). Residues Asn-98 and Asn-126 each coordinate FMN. Asn-126 is a substrate binding site. Cys-129 acts as the Nucleophile in catalysis. The FMN site is built by Lys-165 and Val-191. Residue 192-193 (NT) participates in substrate binding. Residues Gly-217 and 243–244 (GG) each bind FMN.

The protein belongs to the dihydroorotate dehydrogenase family. Type 1 subfamily. As to quaternary structure, heterotetramer of 2 PyrK and 2 PyrD type B subunits. FMN serves as cofactor.

Its subcellular location is the cytoplasm. It carries out the reaction (S)-dihydroorotate + NAD(+) = orotate + NADH + H(+). Its pathway is pyrimidine metabolism; UMP biosynthesis via de novo pathway; orotate from (S)-dihydroorotate (NAD(+) route): step 1/1. Catalyzes the conversion of dihydroorotate to orotate with NAD(+) as electron acceptor. The protein is Dihydroorotate dehydrogenase B (NAD(+)), catalytic subunit (pyrD) of Brachyspira hyodysenteriae (strain ATCC 49526 / WA1).